The primary structure comprises 496 residues: D-2-hydroxyglutarate--pyruvate transhydrogenase DLD3 (496 aa).

A Glycyl lysine isopeptide (Lys-Gly) (interchain with G-Cter in ubiquitin) cross-link involves residue lysine 17. The FAD-binding PCMH-type domain maps to 64–243 (YRGQSNLILL…TGVSIVAAAK (180 aa)).

This sequence belongs to the FAD-binding oxidoreductase/transferase type 4 family. FAD serves as cofactor.

Its subcellular location is the cytoplasm. The enzyme catalyses (R)-lactate + 2 Fe(III)-[cytochrome c] = 2 Fe(II)-[cytochrome c] + pyruvate + 2 H(+). The catalysed reaction is (R)-2-hydroxyglutarate + pyruvate = (R)-lactate + 2-oxoglutarate. Catalyzes the reversible oxidation of (R)-2-hydroxyglutarate to 2-oxoglutarate coupled to reduction of pyruvate to (R)-lactate. Can also use oxaloacetate as electron acceptor instead of pyruvate producing (R)-malate. The chain is D-2-hydroxyglutarate--pyruvate transhydrogenase DLD3 (DLD3) from Saccharomyces cerevisiae (strain ATCC 204508 / S288c) (Baker's yeast).